The primary structure comprises 261 residues: 4-hydroxy-tetrahydrodipicolinate reductase (261 aa).

Position 9–14 (9–14) interacts with NAD(+); the sequence is GCLGRM. Residue Arg36 participates in NADP(+) binding. NAD(+) is bound by residues 97 to 99 and 118 to 121; these read GTT and SANM. His151 serves as the catalytic Proton donor/acceptor. His152 is a (S)-2,3,4,5-tetrahydrodipicolinate binding site. Residue Lys155 is the Proton donor of the active site. 161 to 162 is a binding site for (S)-2,3,4,5-tetrahydrodipicolinate; the sequence is GT.

This sequence belongs to the DapB family.

It localises to the cytoplasm. It carries out the reaction (S)-2,3,4,5-tetrahydrodipicolinate + NAD(+) + H2O = (2S,4S)-4-hydroxy-2,3,4,5-tetrahydrodipicolinate + NADH + H(+). The catalysed reaction is (S)-2,3,4,5-tetrahydrodipicolinate + NADP(+) + H2O = (2S,4S)-4-hydroxy-2,3,4,5-tetrahydrodipicolinate + NADPH + H(+). It functions in the pathway amino-acid biosynthesis; L-lysine biosynthesis via DAP pathway; (S)-tetrahydrodipicolinate from L-aspartate: step 4/4. Catalyzes the conversion of 4-hydroxy-tetrahydrodipicolinate (HTPA) to tetrahydrodipicolinate. In Wolbachia sp. subsp. Drosophila simulans (strain wRi), this protein is 4-hydroxy-tetrahydrodipicolinate reductase.